A 428-amino-acid polypeptide reads, in one-letter code: Enolase (428 aa).

Glutamine 162 serves as a coordination point for (2R)-2-phosphoglycerate. Glutamate 204 serves as the catalytic Proton donor. Residues aspartate 241, glutamate 282, and aspartate 309 each coordinate Mg(2+). (2R)-2-phosphoglycerate is bound by residues lysine 334, arginine 363, serine 364, and lysine 385. The active-site Proton acceptor is lysine 334.

Belongs to the enolase family. It depends on Mg(2+) as a cofactor.

The protein resides in the cytoplasm. The protein localises to the secreted. It localises to the cell surface. The catalysed reaction is (2R)-2-phosphoglycerate = phosphoenolpyruvate + H2O. Its pathway is carbohydrate degradation; glycolysis; pyruvate from D-glyceraldehyde 3-phosphate: step 4/5. In terms of biological role, catalyzes the reversible conversion of 2-phosphoglycerate (2-PG) into phosphoenolpyruvate (PEP). It is essential for the degradation of carbohydrates via glycolysis. This chain is Enolase, found in Mycobacterium ulcerans (strain Agy99).